Here is a 391-residue protein sequence, read N- to C-terminus: 4-hydroxy-3-methylbut-2-en-1-yl diphosphate synthase (flavodoxin) (391 aa).

[4Fe-4S] cluster contacts are provided by C282, C285, C317, and E324.

Belongs to the IspG family. Requires [4Fe-4S] cluster as cofactor.

The catalysed reaction is (2E)-4-hydroxy-3-methylbut-2-enyl diphosphate + oxidized [flavodoxin] + H2O + 2 H(+) = 2-C-methyl-D-erythritol 2,4-cyclic diphosphate + reduced [flavodoxin]. It functions in the pathway isoprenoid biosynthesis; isopentenyl diphosphate biosynthesis via DXP pathway; isopentenyl diphosphate from 1-deoxy-D-xylulose 5-phosphate: step 5/6. Its function is as follows. Converts 2C-methyl-D-erythritol 2,4-cyclodiphosphate (ME-2,4cPP) into 1-hydroxy-2-methyl-2-(E)-butenyl 4-diphosphate. The polypeptide is 4-hydroxy-3-methylbut-2-en-1-yl diphosphate synthase (flavodoxin) (Acidothermus cellulolyticus (strain ATCC 43068 / DSM 8971 / 11B)).